Here is a 265-residue protein sequence, read N- to C-terminus: Energy-coupling factor transporter transmembrane protein EcfT (265 aa).

6 helical membrane-spanning segments follow: residues 29-49 (VMAF…ALMF), 63-83 (FLFF…TLLL), 94-114 (LVDL…AMMF), 117-137 (FVLI…IELT), 143-163 (ILAP…MLSI), and 243-263 (RFAD…LFWL).

This sequence belongs to the energy-coupling factor EcfT family. As to quaternary structure, forms a stable energy-coupling factor (ECF) transporter complex composed of 2 membrane-embedded substrate-binding proteins (S component), 2 ATP-binding proteins (A component) and 2 transmembrane proteins (T component). May be able to interact with more than 1 S component at a time.

The protein localises to the cell membrane. Functionally, transmembrane (T) component of an energy-coupling factor (ECF) ABC-transporter complex. Unlike classic ABC transporters this ECF transporter provides the energy necessary to transport a number of different substrates. This is Energy-coupling factor transporter transmembrane protein EcfT from Listeria innocua serovar 6a (strain ATCC BAA-680 / CLIP 11262).